Reading from the N-terminus, the 83-residue chain is Probable calcium-binding protein CML29 (83 aa).

EF-hand domains lie at 5–40 (TEKAEHDRIFKKFDANGDGKISAAELEEALKTLGSV) and 43–75 (DDVKRMMAEIDTDGDGNISYQEFTDFAGANRGL). The Ca(2+) site is built by aspartate 18, asparagine 20, aspartate 22, lysine 24, glutamate 29, aspartate 53, aspartate 55, aspartate 57, asparagine 59, and glutamate 64.

In terms of biological role, potential calcium sensor. This Arabidopsis thaliana (Mouse-ear cress) protein is Probable calcium-binding protein CML29 (CML29).